The primary structure comprises 209 residues: Tektin bundle-interacting protein 1 (209 aa).

As to quaternary structure, microtubule inner protein component of sperm flagellar doublet microtubules.

The protein resides in the cytoplasm. It is found in the cytoskeleton. It localises to the cilium axoneme. The protein localises to the flagellum axoneme. Microtubule inner protein (MIP) part of the dynein-decorated doublet microtubules (DMTs) in cilia axoneme, which is required for motile cilia beating. Located at the center of the tektin bundle where may function to recruit tektins or stabilize the bundle. This chain is Tektin bundle-interacting protein 1, found in Homo sapiens (Human).